The sequence spans 120 residues: Non-specific lipid-transfer protein 6 (120 aa).

A signal peptide spans 1-26 (MARSMSLKLACVVVLCLLVDAPLAQG). 2 disulfides stabilise this stretch: C57/C102 and C77/C116.

Belongs to the plant LTP family. As to expression, specifically expressed in fiber cells.

In terms of biological role, plant non-specific lipid-transfer proteins transfer phospholipids as well as galactolipids across membranes. May play a role in wax or cutin deposition in the cell walls of expanding epidermal cells and certain secretory tissues. This is Non-specific lipid-transfer protein 6 (LTP6) from Gossypium hirsutum (Upland cotton).